A 298-amino-acid chain; its full sequence is N-acetylmuramic acid 6-phosphate etherase (298 aa).

Positions 55-218 (ASKRYREGGR…STGVMIKQGK (164 aa)) constitute an SIS domain. The Proton donor role is filled by Glu-83. Glu-114 is a catalytic residue.

The protein belongs to the GCKR-like family. MurNAc-6-P etherase subfamily. As to quaternary structure, homodimer.

The catalysed reaction is N-acetyl-D-muramate 6-phosphate + H2O = N-acetyl-D-glucosamine 6-phosphate + (R)-lactate. It functions in the pathway amino-sugar metabolism; N-acetylmuramate degradation. Functionally, specifically catalyzes the cleavage of the D-lactyl ether substituent of MurNAc 6-phosphate, producing GlcNAc 6-phosphate and D-lactate. The polypeptide is N-acetylmuramic acid 6-phosphate etherase (Lactobacillus johnsonii (strain CNCM I-12250 / La1 / NCC 533)).